Reading from the N-terminus, the 158-residue chain is MSRFTGKKIVIIGDRDGIPGPAIEECLKPIDCEVIFSSTECFVUTAAGAMDLENQKRIKEATEKFGAENLVVLIGAAEAEAAGLAAETVTAGDPTFAGPLAGVELGLRVYHAVEPEFKDEVDAQIFDDQVGMMEMVLNVDEIIEEMQSIRSQFCKFND.

Residue U44 is part of the active site. Position 44 (U44) is a non-standard amino acid, selenocysteine.

This sequence belongs to the GrdA family. Monomer. Component of the glycine, sarcosine and betaine reductase complexes, together with components B and C.

The catalysed reaction is acetyl phosphate + [thioredoxin]-disulfide + NH4(+) + H2O = [thioredoxin]-dithiol + glycine + phosphate + H(+). It catalyses the reaction acetyl phosphate + methylamine + [thioredoxin]-disulfide + H2O = sarcosine + [thioredoxin]-dithiol + phosphate + H(+). The enzyme catalyses acetyl phosphate + trimethylamine + [thioredoxin]-disulfide + H2O = glycine betaine + [thioredoxin]-dithiol + phosphate + H(+). Its function is as follows. In the first step of glycine, betaine and sarcosine reductases, the substrate is bound to component PB via a Schiff base intermediate. Then the PB-activated substrate is nucleophilically attacked by the selenol anion of component PA to transform it to a carboxymethylated selenoether and the respective amine. By action of component PC, acetyl phosphate is formed, leaving component PA in its oxidized state. Finally component PA becomes reduced by the thioredoxin system to start a new catalytic cycle of reductive deamination. This chain is Glycine/sarcosine/betaine reductase complex component A (grdA), found in Acetoanaerobium sticklandii (strain ATCC 12662 / DSM 519 / JCM 1433 / CCUG 9281 / NCIMB 10654 / HF) (Clostridium sticklandii).